The chain runs to 202 residues: Matrix protein (202 aa).

A PPXY motif motif is present at residues 35–38 (PPEY). The tract at residues 115-151 (KLRRTLIFQWAESHGPLEGEELEYSQEITWDDEAEFV) is essential for glycoprotein binding.

It belongs to the lyssavirus matrix protein family. Homomultimer. Interacts with nucleoprotein and with the cytoplasmic domain of glycoprotein.

It is found in the virion membrane. It localises to the host endomembrane system. In terms of biological role, plays a major role in assembly and budding of virion. Completely covers the ribonucleoprotein coil and keep it in condensed bullet-shaped form. Inhibits viral transcription and stimulates replication. Plays a major role in early induction of TRAIL-mediated apoptosis in infected neurons. The polypeptide is Matrix protein (M) (Mokola virus (MOKV)).